The primary structure comprises 42 residues: Protein YkgS (42 aa).

The polypeptide is Protein YkgS (ykgS) (Escherichia coli (strain K12)).